A 433-amino-acid chain; its full sequence is MNKLRLFRSFFAFLLPFGMATGAAHGALTVEIVGGAAQQIPIAVVPFAQQGVIPGQQDTIANVIGADLRRSGLFRVLETRGVANQPSDISQVNYQDWAAIQAQALTIGNIETLPGNRLKVSFRLLDVYKQSQLVGMEYNITPSQLRLTAHKIADVIYQKLTGEQGVFATRIAYVSKSGGRYALQVADSDGYNPQTVVSSAEPIISPVWSPDGTKLAYVSFEKKKPIIYVQSLVSGQRTVLANFKGNNSAPAWSPDGKRLAIVLTHAANSQIYSINADGTGLQQLTRTTAIDTEPTWSPDGRYIYFTSDRGGSPQIYRMPSSGGEASRMTFEGSYVVSPRLSPDGKSLAYIRRDGGQFRVALQDLQTGQVQVLSDGPKDESPSFAPNGRMLLHATRVGGRGALAAVSADGRVKQRLSESGGDVREPAWGPIISQ.

The first 26 residues, methionine 1–glycine 26, serve as a signal peptide directing secretion.

This sequence belongs to the TolB family. The Tol-Pal system is composed of five core proteins: the inner membrane proteins TolA, TolQ and TolR, the periplasmic protein TolB and the outer membrane protein Pal. They form a network linking the inner and outer membranes and the peptidoglycan layer.

Its subcellular location is the periplasm. Functionally, part of the Tol-Pal system, which plays a role in outer membrane invagination during cell division and is important for maintaining outer membrane integrity. In Methylobacillus flagellatus (strain ATCC 51484 / DSM 6875 / VKM B-1610 / KT), this protein is Tol-Pal system protein TolB.